Reading from the N-terminus, the 659-residue chain is Cysteine-rich receptor-like protein kinase 7 (659 aa).

Residues 1 to 23 (MSSLFPFIFLFLFSFLTSFRASA) form the signal peptide. The Extracellular segment spans residues 24 to 273 (QDPRFLAYYC…SLSDKSGNSN (250 aa)). Gnk2-homologous domains follow at residues 27–131 (RFLA…HKNI) and 142–244 (FILR…LYDF). 5 N-linked (GlcNAc...) asparagine glycosylation sites follow: N35, N42, N60, N69, and N103. N-linked (GlcNAc...) asparagine glycosylation occurs at N246. Residues 274-294 (VVVVAVVVPIIVAVLIFIAGY) form a helical membrane-spanning segment. Topologically, residues 295 to 659 (CFFAKRAKKT…DKSMSDLDPR (365 aa)) are cytoplasmic. Positions 336–622 (FSENNKIGRG…ALPAPQQPGF (287 aa)) constitute a Protein kinase domain. Residues 342–350 (IGRGGFGDV) and K364 contribute to the ATP site. Phosphotyrosine is present on Y409. D461 (proton acceptor) is an active-site residue. The residue at position 465 (S465) is a Phosphoserine. At T501 the chain carries Phosphothreonine. Y509 is modified (phosphotyrosine). The segment at 626–659 (SRPGTNRLDSDQSTTNKSVTVSIDDKSMSDLDPR) is disordered. Residues 636-646 (DQSTTNKSVTV) are compositionally biased toward polar residues. Residues 648–659 (IDDKSMSDLDPR) are compositionally biased toward basic and acidic residues.

It belongs to the protein kinase superfamily. Ser/Thr protein kinase family. CRK subfamily.

It is found in the membrane. It catalyses the reaction L-seryl-[protein] + ATP = O-phospho-L-seryl-[protein] + ADP + H(+). The enzyme catalyses L-threonyl-[protein] + ATP = O-phospho-L-threonyl-[protein] + ADP + H(+). In Arabidopsis thaliana (Mouse-ear cress), this protein is Cysteine-rich receptor-like protein kinase 7 (CRK7).